The sequence spans 770 residues: Proton-coupled zinc antiporter SLC30A5 (770 aa).

The Cytoplasmic segment spans residues 1–29 (MEEKYSSQALAGGGVLGPVDVPSARLTRY). Residues 30–50 (IVLLCFAKFLKAVGLFESYDL) form a helical membrane-spanning segment. Residues 51 to 53 (LKA) are Lumenal-facing. A helical transmembrane segment spans residues 54 to 74 (VHLVQFIFIVKLGSAFFMVLF). The Cytoplasmic segment spans residues 75-95 (QKPFSSGKVVTKHQWIKIFKH). Residues 96–116 (AVVGCIISLLWFFGLTLCGPL) form a helical membrane-spanning segment. A topological domain (lumenal) is located at residue arginine 117. A helical transmembrane segment spans residues 118-138 (TLLLFEHSDVVVLSLLSVLFT). The Cytoplasmic segment spans residues 139–149 (SSGGGPAKTRG). A helical transmembrane segment spans residues 150–170 (AAFFIIAVICLLLFDNDDLMA). Residues 171 to 190 (KIAEHPEGHHDSALTHVLYT) are Lumenal-facing. A helical membrane pass occupies residues 191–211 (VIAFLGVADHKGGVLLLVLAL). The Cytoplasmic portion of the chain corresponds to 212–235 (CCKVGFHMASRKLSVDVGGAKRLQ). Residues 236–256 (ALSHLVSVLLLCPWVIVLSLT) traverse the membrane as a helical segment. At 257 to 264 (TESKVESW) the chain is on the lumenal side. Residues 265–285 (SSLIMPFITVIFFVVILDFYV) form a helical membrane-spanning segment. Over 286 to 300 (ESICSVKMESSKCAR) the chain is Cytoplasmic. The helical transmembrane segment at 301–321 (YGSFLIFISALLFGNFWTHPI) threads the bilayer. Over 322-339 (TDQLRAMNKPAHHESTEH) the chain is Lumenal. The helical transmembrane segment at 340–360 (VLSGGVVVSAVFFILSANILS) threads the bilayer. Over 361–415 (SPSRKGQKGTLIGYSPEGTPLYNFMGDAIQQSSQSLPRFIKESLKQILEEYDSRQ) the chain is Cytoplasmic. Residues 416 to 436 (IFYFLCLNLAFTFVELFYGVW) traverse the membrane as a helical segment. Residues 437–445 (TNSLGLISD) lie on the Lumenal side of the membrane. Residues 446 to 466 (GFHMLFDCSALVMGLFAALMT) form a helical membrane-spanning segment. Zn(2+) contacts are provided by histidine 448 and aspartate 452. Over 467–480 (RWKATRIFSYGYGR) the chain is Cytoplasmic. The helical transmembrane segment at 481 to 501 (VEILSGFINGLFLMVIAFFVF) threads the bilayer. Residues 502 to 517 (MESVARLVDPPDIDTN) lie on the Lumenal side of the membrane. Residues 518 to 538 (MLTPVSVGGLIVNLVGICAFS) form a helical membrane-spanning segment. The segment at 539-579 (HAHSHGASRGGCHSHEHSHSYHGHSHSHGHGHSHNDHGHSH) is his-rich loop; required for zinc transport. The Cytoplasmic portion of the chain corresponds to 539–597 (HAHSHGASRGGCHSHEHSHSYHGHSHSHGHGHSHNDHGHSHGHSHVSSGGGMNTNMRGV). The interval 548 to 586 (GGCHSHEHSHSYHGHSHSHGHGHSHNDHGHSHGHSHVSS) is disordered. The segment covering 558-570 (SYHGHSHSHGHGH) has biased composition (basic residues). The chain crosses the membrane as a helical span at residues 598 to 618 (FLHVLADTLGSVGVIVSTTFI). Histidine 600 and aspartate 604 together coordinate Zn(2+). Residues 619-622 (QQFG) are Lumenal-facing. The helical transmembrane segment at 623–643 (WLIADPLCSLFIATLIFLSVI) threads the bilayer. Residues 644–770 (PLLKDACQVL…KYYKDGTYIM (127 aa)) are Cytoplasmic-facing.

This sequence belongs to the cation diffusion facilitator (CDF) transporter (TC 2.A.4) family. SLC30A subfamily. As to quaternary structure, heterodimer with SLC30A6/ZNT6; form a functional zinc ion transmembrane transporter.

The protein localises to the golgi apparatus. It is found in the golgi stack membrane. The protein resides in the cytoplasmic vesicle. Its subcellular location is the COPII-coated vesicle membrane. It localises to the secretory vesicle membrane. The protein localises to the trans-Golgi network membrane. It catalyses the reaction Zn(2+)(in) + 2 H(+)(out) = Zn(2+)(out) + 2 H(+)(in). In terms of biological role, together with SLC30A6 forms a functional proton-coupled zinc ion antiporter mediating zinc entry into the lumen of organelles along the secretory pathway. By contributing to zinc ion homeostasis within the early secretory pathway, regulates the activation and folding of enzymes like alkaline phosphatases and enzymes involved in phosphatidylinositol glycan anchor biosynthesis. The chain is Proton-coupled zinc antiporter SLC30A5 from Gallus gallus (Chicken).